The primary structure comprises 310 residues: Ribosomal RNA small subunit methyltransferase H (310 aa).

Residues 32–34 (GGH), D52, F79, D100, and Q107 contribute to the S-adenosyl-L-methionine site.

The protein belongs to the methyltransferase superfamily. RsmH family.

It is found in the cytoplasm. The catalysed reaction is cytidine(1402) in 16S rRNA + S-adenosyl-L-methionine = N(4)-methylcytidine(1402) in 16S rRNA + S-adenosyl-L-homocysteine + H(+). Specifically methylates the N4 position of cytidine in position 1402 (C1402) of 16S rRNA. The polypeptide is Ribosomal RNA small subunit methyltransferase H (Bacillus mycoides (strain KBAB4) (Bacillus weihenstephanensis)).